The primary structure comprises 539 residues: Putative dimethylaniline monooxygenase [N-oxide-forming] 6 (539 aa).

Residues 9–13 (GAGVS), E32, 40–41 (LW), and 61–62 (NS) contribute to the FAD site. Residue 195–198 (SGSD) participates in NADP(+) binding. A helical membrane pass occupies residues 518-538 (FYNLLKMLSFPLLLLAVTLTF).

It belongs to the FMO family. It depends on FAD as a cofactor.

The protein localises to the microsome membrane. The protein resides in the endoplasmic reticulum membrane. It catalyses the reaction N,N-dimethylaniline + NADPH + O2 + H(+) = N,N-dimethylaniline N-oxide + NADP(+) + H2O. In terms of biological role, it is probable that this protein is only produced in very small quantity or not at all as the gene coding for it seems to be unable to produce full-length transcripts. The chain is Putative dimethylaniline monooxygenase [N-oxide-forming] 6 (FMO6P) from Homo sapiens (Human).